Consider the following 74-residue polypeptide: Large ribosomal subunit protein eL38B (74 aa).

Belongs to the eukaryotic ribosomal protein eL38 family. Component of the large ribosomal subunit (LSU). Mature yeast ribosomes consist of a small (40S) and a large (60S) subunit. The 40S small subunit contains 1 molecule of ribosomal RNA (18S rRNA) and at least 33 different proteins. The large 60S subunit contains 3 rRNA molecules (25S, 5.8S and 5S rRNA) and at least 46 different proteins.

It localises to the cytoplasm. Functionally, component of the ribosome, a large ribonucleoprotein complex responsible for the synthesis of proteins in the cell. The small ribosomal subunit (SSU) binds messenger RNAs (mRNAs) and translates the encoded message by selecting cognate aminoacyl-transfer RNA (tRNA) molecules. The large subunit (LSU) contains the ribosomal catalytic site termed the peptidyl transferase center (PTC), which catalyzes the formation of peptide bonds, thereby polymerizing the amino acids delivered by tRNAs into a polypeptide chain. The nascent polypeptides leave the ribosome through a tunnel in the LSU and interact with protein factors that function in enzymatic processing, targeting, and the membrane insertion of nascent chains at the exit of the ribosomal tunnel. This Schizosaccharomyces pombe (strain 972 / ATCC 24843) (Fission yeast) protein is Large ribosomal subunit protein eL38B (rpl3802).